The chain runs to 206 residues: Large ribosomal subunit protein uL4 (206 aa).

A disordered region spans residues 47–94; that stretch reads NRAQKGRAEVSKSTRKPWRQKGTGRARAGMASSPLWRGGGRVFPNSPE. Residues 59–70 are compositionally biased toward basic residues; it reads STRKPWRQKGTG.

It belongs to the universal ribosomal protein uL4 family. In terms of assembly, part of the 50S ribosomal subunit.

One of the primary rRNA binding proteins, this protein initially binds near the 5'-end of the 23S rRNA. It is important during the early stages of 50S assembly. It makes multiple contacts with different domains of the 23S rRNA in the assembled 50S subunit and ribosome. In terms of biological role, forms part of the polypeptide exit tunnel. The sequence is that of Large ribosomal subunit protein uL4 from Aromatoleum aromaticum (strain DSM 19018 / LMG 30748 / EbN1) (Azoarcus sp. (strain EbN1)).